The primary structure comprises 481 residues: O-acetyltransferase andG (481 aa).

This sequence belongs to the fumigaclavine B O-acetyltransferase family. Monomer.

Its pathway is secondary metabolite biosynthesis; terpenoid biosynthesis. Functionally, O-acetyltransferase; part of the gene cluster that mediates the biosynthesis of anditomin, a fungal meroterpenoid. The first step of the pathway is the synthesis of 3,5-dimethylorsellinic acid (DMOA) by the polyketide synthase andM. DMOA is then converted to the phthalide compound 5,7-dihydroxy-4,6-dimethylphthalide (DHDMP) by the cytochrome P450 monooxygenase andK, which is further prenylated by the prenyltransferase andD to yield farnesyl-DHDMP. Further epoxidation by the FAD-dependent monooxygenase andE leads to epoxyfarnesyl-DHDMP. The next step involves the terpene cyclase andB that converts epoxyfarnesyl-DHDMP into preandiloid A through opening of the epoxide ring followed by the cyclization of the farnesyl moiety. Preandiloid A is in turn oxidized at the C-3 hydroxyl group to yield preandiloid B by the dehydrogenase andC. The dioxygenase andA is solely responsible for the dehydrogenation of preandiloid B leading to the enone preandiloid C, as well as for the intriguing structural rearrangement to generate the bicyclo[2.2.2]octane core, transforming preandiloid C into andiconin. FAD-binding monooxygenase andJ then produces andilesin D which is reduced by dehydrogenase andI to yield andilesin A. Action of acetyltransferase andG followed by a spontaneous acetate elimination leads then to andilesin B, which is in turn substrate of the short chain dehydrogenase andH to yield andilesin C. Finally, the dioxygenase andF catalyzes the transformation of andilesin C to anditomin. The sequence is that of O-acetyltransferase andG from Emericella variicolor (Aspergillus stellatus).